The primary structure comprises 810 residues: Exocyst complex component 6B (810 aa).

Positions 79–118 form a coiled coil; it reads TELLKVRGEAQKLKNQVTDTNRKLQHEGKELVIAMEELKQ. The interval 258–282 is disordered; it reads ESTSPKSEQDSGILDVEDEEDDEEV. Positions 272 to 282 are enriched in acidic residues; sequence DVEDEEDDEEV.

It belongs to the SEC15 family. As to quaternary structure, the exocyst complex is composed of SEC3, SEC5, SEC6, SEC8, SEC10, SEC15, EXO70 and EXO84.

In terms of biological role, component of the exocyst complex involved in the docking of exocytic vesicles with fusion sites on the plasma membrane. In Mus musculus (Mouse), this protein is Exocyst complex component 6B (Exoc6b).